A 245-amino-acid polypeptide reads, in one-letter code: Inner membrane protein YgaZ (245 aa).

Residues 1–24 (MESPTPQPAPGSATFMEGCKDSLP) are Cytoplasmic-facing. Residues 25–45 (IVISYIPVAFAFGLNATRLGF) form a helical membrane-spanning segment. Over 46–63 (SPLESVFFSCIIYAGASQ) the chain is Periplasmic. Residues 64–84 (FVITAMLAAGSSLWIAALTVM) form a helical membrane-spanning segment. Residues 85–109 (AMDVRHVLYGPSLRSRIIQRLQKSK) are Cytoplasmic-facing. The chain crosses the membrane as a helical span at residues 110-130 (TALWAFGLTDEVFAAATAKLV). The Periplasmic segment spans residues 131–140 (RNNRRWSENW). A helical transmembrane segment spans residues 141 to 161 (MIGIAFSSWSSWVFGTVIGAF). The Cytoplasmic segment spans residues 162–172 (SGSGLLQGYPA). A helical transmembrane segment spans residues 173 to 193 (VEAALGFMLPALFMSFLLASF). Residues 194 to 205 (QRKQSLCVTAAL) are Periplasmic-facing. The chain crosses the membrane as a helical span at residues 206–226 (VGALAGVTLFSIPVAILAGIV). Over 227–245 (CGCLTALIQAFWQGAPDEL) the chain is Cytoplasmic.

Belongs to the AzlC family.

It is found in the cell inner membrane. This Escherichia coli (strain K12) protein is Inner membrane protein YgaZ (ygaZ).